Here is a 169-residue protein sequence, read N- to C-terminus: tRNA (cytidine(56)-2'-O)-methyltransferase (169 aa).

Residues Leu-77, 103-107 (GSEKV), and 121-128 (IGNQPHSE) each bind S-adenosyl-L-methionine.

It belongs to the aTrm56 family. In terms of assembly, homodimer.

Its subcellular location is the cytoplasm. It catalyses the reaction cytidine(56) in tRNA + S-adenosyl-L-methionine = 2'-O-methylcytidine(56) in tRNA + S-adenosyl-L-homocysteine + H(+). Specifically catalyzes the AdoMet-dependent 2'-O-ribose methylation of cytidine at position 56 in tRNAs. The sequence is that of tRNA (cytidine(56)-2'-O)-methyltransferase from Sulfurisphaera tokodaii (strain DSM 16993 / JCM 10545 / NBRC 100140 / 7) (Sulfolobus tokodaii).